A 510-amino-acid chain; its full sequence is GMP synthase [glutamine-hydrolyzing] (510 aa).

A Glutamine amidotransferase type-1 domain is found at 5–195 (LVLVVDFGGQ…LFNVCNLKGD (191 aa)). The Nucleophile role is filled by Cys-82. Residues His-169 and Glu-171 contribute to the active site. A GMPS ATP-PPase domain is found at 196–385 (WSMSSFAEQQ…LGIPHKLVWR (190 aa)). 223–229 (SGGVDSS) serves as a coordination point for ATP.

In terms of assembly, homodimer.

The catalysed reaction is XMP + L-glutamine + ATP + H2O = GMP + L-glutamate + AMP + diphosphate + 2 H(+). Its pathway is purine metabolism; GMP biosynthesis; GMP from XMP (L-Gln route): step 1/1. In terms of biological role, catalyzes the synthesis of GMP from XMP. This Clostridium botulinum (strain Loch Maree / Type A3) protein is GMP synthase [glutamine-hydrolyzing].